A 391-amino-acid polypeptide reads, in one-letter code: Inositol-tetrakisphosphate 1-kinase 2 (391 aa).

The 1D-myo-inositol 1,3,4-trisphosphate site is built by lysine 90 and lysine 132. ATP-binding residues include arginine 167 and lysine 217. The ATP-grasp domain occupies 178 to 384 (KLSDCSGSLF…FFQNLAQVKY (207 aa)). 1D-myo-inositol 1,3,4-trisphosphate is bound by residues histidine 228 and lysine 260. ATP-binding positions include 249–260 (QEFVNHGGVMFK) and serine 275. Mg(2+) is bound by residues aspartate 340, aspartate 355, and asparagine 357. Residue asparagine 357 coordinates 1D-myo-inositol 1,3,4-trisphosphate.

Belongs to the ITPK1 family. Monomer. The cofactor is Mg(2+). As to expression, expressed in seedling roots, cotyledons, rosette leaves, cauline leaves, stems, flowers, siliques and seeds.

The enzyme catalyses 1D-myo-inositol 3,4,5,6-tetrakisphosphate + ATP = 1D-myo-inositol 1,3,4,5,6-pentakisphosphate + ADP + H(+). It carries out the reaction 1D-myo-inositol 1,3,4-trisphosphate + ATP = 1D-myo-inositol 1,3,4,5-tetrakisphosphate + ADP + H(+). The catalysed reaction is 1D-myo-inositol 1,3,4-trisphosphate + ATP = 1D-myo-inositol 1,3,4,6-tetrakisphosphate + ADP + H(+). Kinase that can phosphorylate various inositol polyphosphate such as Ins(3,4,5,6)P4 or Ins(1,3,4)P3. Phosphorylates Ins(3,4,5,6)P4 to form InsP5. This reaction is thought to have regulatory importance, since Ins(3,4,5,6)P4 is an inhibitor of plasma membrane Ca(2+)-activated Cl(-) channels, while Ins(1,3,4,5,6)P5 is not. Also phosphorylates Ins(1,3,4)P3 or a racemic mixture of Ins(1,4,6)P3 and Ins(3,4,6)P3 to form InsP4. Ins(1,3,4,6)P4 is an essential molecule in the hexakisphosphate (InsP6) pathway. Plays a role in seed coat development and lipid polyester barrier formation. The polypeptide is Inositol-tetrakisphosphate 1-kinase 2 (ITPK2) (Arabidopsis thaliana (Mouse-ear cress)).